Here is a 299-residue protein sequence, read N- to C-terminus: MTTVNLAAYRFVSLDSIEQWRPLVAARCNTLGLRGTILLAPEGINLFIAGPREATDAFVDYIRHDPLFEGKFADLPFKESLSDSQPFRRMLVRLKREIITMKKPAIKPELGRAPSVDARTLKAWLDQGHDDASRPVVMLDTRNAFEVDVGTFDRALDYRIDKFSEFPAVIEANRADLEGKTIVSFCTGGIRCEKAAIHMKDVGIENVYQLEGGILKYFEEVGGAHYHGDCFVFDYRTALNPQLAPTADVTCFACRAVVPADAQQSPLYVPGKCCPACHPGDSGTPGRRAEPGAEPARAV.

A Rhodanese domain is found at 132 to 226 (ASRPVVMLDT…YFEEVGGAHY (95 aa)). The Cysteine persulfide intermediate role is filled by C186.

This sequence belongs to the TrhO family.

The enzyme catalyses uridine(34) in tRNA + AH2 + O2 = 5-hydroxyuridine(34) in tRNA + A + H2O. Functionally, catalyzes oxygen-dependent 5-hydroxyuridine (ho5U) modification at position 34 in tRNAs. The protein is tRNA uridine(34) hydroxylase of Burkholderia pseudomallei (strain K96243).